Reading from the N-terminus, the 140-residue chain is ATP synthase epsilon chain (140 aa).

The protein belongs to the ATPase epsilon chain family. F-type ATPases have 2 components, CF(1) - the catalytic core - and CF(0) - the membrane proton channel. CF(1) has five subunits: alpha(3), beta(3), gamma(1), delta(1), epsilon(1). CF(0) has three main subunits: a, b and c.

Its subcellular location is the cell inner membrane. Its function is as follows. Produces ATP from ADP in the presence of a proton gradient across the membrane. In Xylella fastidiosa (strain Temecula1 / ATCC 700964), this protein is ATP synthase epsilon chain.